The chain runs to 279 residues: Fatty acid metabolism regulator protein (279 aa).

The HTH gntR-type domain maps to 6–74; it reads KSPAGFAEKY…HGKPTKVNQF (69 aa). The segment at residues 34–53 is a DNA-binding region (H-T-H motif); sequence ERELSELIGVTRTTLREVLQ.

In terms of assembly, homodimer.

It is found in the cytoplasm. Its function is as follows. Multifunctional regulator of fatty acid metabolism. The chain is Fatty acid metabolism regulator protein from Vibrio cholerae serotype O1 (strain ATCC 39541 / Classical Ogawa 395 / O395).